A 171-amino-acid polypeptide reads, in one-letter code: S-ribosylhomocysteine lyase (171 aa).

Fe cation contacts are provided by H54, H58, and C128.

Belongs to the LuxS family. As to quaternary structure, homodimer. Fe cation is required as a cofactor.

It catalyses the reaction S-(5-deoxy-D-ribos-5-yl)-L-homocysteine = (S)-4,5-dihydroxypentane-2,3-dione + L-homocysteine. Its function is as follows. Involved in the synthesis of autoinducer 2 (AI-2) which is secreted by bacteria and is used to communicate both the cell density and the metabolic potential of the environment. The regulation of gene expression in response to changes in cell density is called quorum sensing. Catalyzes the transformation of S-ribosylhomocysteine (RHC) to homocysteine (HC) and 4,5-dihydroxy-2,3-pentadione (DPD). The sequence is that of S-ribosylhomocysteine lyase from Photorhabdus laumondii subsp. laumondii (strain DSM 15139 / CIP 105565 / TT01) (Photorhabdus luminescens subsp. laumondii).